We begin with the raw amino-acid sequence, 519 residues long: Circadian clock oscillator protein KaiC 1 (519 aa).

KaiC domains follow at residues 1–248 (MNLP…INIF) and 262–519 (ARIS…KTAE). ATP-binding residues include G50, T51, G52, K53, T54, L55, S90, K225, L226, R227, T229, H231, T241, T291, G292, T293, G294, K295, T296, and L297. Mg(2+) is bound at residue T54. Mg(2+) is bound at residue T296. E319 is a Mg(2+) binding site. W332 contacts ATP. S432 carries the post-translational modification Phosphoserine; by autocatalysis. Position 433 is a phosphothreonine; by autocatalysis (T433). R452, K458, M459, R460, S462, H464, and K466 together coordinate ATP.

It belongs to the KaiC family. Homohexamer; hexamerization is dependent on ATP-binding. Core component of the KaiABC complex, at least composed of a KaiC homohexamer, a KaiB dimer and two KaiA dimers. Interacts directly with SasA. Multimerizes, probably forming homohexamers, no interaction with KaiC2 or KaiC3 is seen. Interacts with KaiA. In another study interacts with itself, KaiB1, KaiB3 and KaiC3. Interacts with SasA (hik8). Mg(2+) serves as cofactor. In terms of processing, phosphorylated on serine and threonine residues by autocatalysis. Has a 4 step phosphorylation cycle; the autokinase acts first on Thr-433, then Ser-432. When Ser-432 is modified KaiC switches to an autophosphatase mode, acting first on phospho-Thr-433 then phospho-Ser-432.

The catalysed reaction is L-seryl-[protein] + ATP = O-phospho-L-seryl-[protein] + ADP + H(+). It carries out the reaction L-threonyl-[protein] + ATP = O-phospho-L-threonyl-[protein] + ADP + H(+). It catalyses the reaction ATP + H2O = ADP + phosphate + H(+). The interaction with KaiA enhances its phosphorylation status, while the interaction with KaiB decreases it. Its function is as follows. Component of the oscillator and circadian clock in this organism, enhances fitness in a rhythmic environment. Autophosphorylates in the presence of KaiA, no activity is seen in its absence. In terms of biological role, central component of the KaiABC oscillator complex, which constitutes the main circadian regulator in cyanobacteria. Complex composition changes during the circadian cycle to control KaiC phosphorylation. KaiA stimulates KaiC autophosphorylation, while KaiB sequesters KaiA, leading to KaiC autodephosphorylation. Clock output pathways impact the RpaA transcriptional regulator. KaiC enhances the autophosphorylation activity of SasA, which then transfers its phosphate group to RpaA to activate it. KaiB and KaiC together enhance the phospho-RpaA dephosphatase activity of CikA. Has a weak, temperature-independent ATPase activity; ATPase activity defines the circadian period. The phosphorylation state of KaiC modulates its ATPase activity and effects KaiB binding. The protein is Circadian clock oscillator protein KaiC 1 of Synechocystis sp. (strain ATCC 27184 / PCC 6803 / Kazusa).